Here is a 388-residue protein sequence, read N- to C-terminus: Succinate--CoA ligase [ADP-forming] subunit beta (388 aa).

The 236-residue stretch at 9 to 244 (KQLFAEFGLP…PSQEDEREAH (236 aa)) folds into the ATP-grasp domain. Residues lysine 46, 53-55 (GRG), glutamate 99, serine 102, and glutamate 107 each bind ATP. Asparagine 199 and aspartate 213 together coordinate Mg(2+). Residues asparagine 264 and 321–323 (GIV) each bind substrate.

This sequence belongs to the succinate/malate CoA ligase beta subunit family. In terms of assembly, heterotetramer of two alpha and two beta subunits. Mg(2+) serves as cofactor.

The catalysed reaction is succinate + ATP + CoA = succinyl-CoA + ADP + phosphate. It catalyses the reaction GTP + succinate + CoA = succinyl-CoA + GDP + phosphate. Its pathway is carbohydrate metabolism; tricarboxylic acid cycle; succinate from succinyl-CoA (ligase route): step 1/1. In terms of biological role, succinyl-CoA synthetase functions in the citric acid cycle (TCA), coupling the hydrolysis of succinyl-CoA to the synthesis of either ATP or GTP and thus represents the only step of substrate-level phosphorylation in the TCA. The beta subunit provides nucleotide specificity of the enzyme and binds the substrate succinate, while the binding sites for coenzyme A and phosphate are found in the alpha subunit. The protein is Succinate--CoA ligase [ADP-forming] subunit beta of Vibrio campbellii (strain ATCC BAA-1116).